Consider the following 312-residue polypeptide: tRNA dimethylallyltransferase (312 aa).

Gly10–Thr17 provides a ligand contact to ATP. Thr12–Thr17 serves as a coordination point for substrate.

This sequence belongs to the IPP transferase family. Monomer. Requires Mg(2+) as cofactor.

The catalysed reaction is adenosine(37) in tRNA + dimethylallyl diphosphate = N(6)-dimethylallyladenosine(37) in tRNA + diphosphate. Functionally, catalyzes the transfer of a dimethylallyl group onto the adenine at position 37 in tRNAs that read codons beginning with uridine, leading to the formation of N6-(dimethylallyl)adenosine (i(6)A). This Coprothermobacter proteolyticus (strain ATCC 35245 / DSM 5265 / OCM 4 / BT) protein is tRNA dimethylallyltransferase.